The chain runs to 409 residues: MARINRQTAYQKAQEIEFSTSSADPLAAWRISGIKGTAWEQWYFDSIADDGKSGIVLTMARDASYTVLGRGVLRVELDVTFEDGSHHNHVDWMNEAIVEDRSSPKSTGTIDGVWTAPGKSIRFQIAADGSAAKVEVDTPETKGHFTLAALSPPMYPNGETQNELESQGKVASTELLPKIHLVQVIPTATFEGDLMVNGRLLRFRGIGGHMHAWAQGAWFDTTLGWKVARGVAGPFSVTLMEYTDMEGIVHSSGYVVEDGVKRFGGLETYATPRSSATSQQVLKYRDEDRKGKQTVRWTPTYNTGFAGRFGDSSTGAILQFSSADSGETYRFELTHRRKAFEFLFGSSDSGLTAFLGEIKGGKIGSEVYEGVQASNVCVLPQGWTKIYFFICMLLAVVTFGYINILETNT.

Residues Ile-386 to Glu-406 form a helical membrane-spanning segment.

Belongs to the Diels-Alderase family.

Its subcellular location is the membrane. It participates in mycotoxin biosynthesis. Functionally, diels-Alderase; part of the gene cluster that mediates the biosynthesis of UCS1025A, a member of the pyrrolizidinone family that acts as a strong telomerase inhibitor and displays potent antibacterial and antitumor properties. These compounds share a hemiaminal-containing pyrrolizidinone core fused with a gamma-lactone, giving a furopyrrolizidine that is connected to a decalin fragment. The polyketide synthase module (PKS) of the PKS-NRPS ucsA is responsible for the synthesis of the polyketide backbone via the condensation of an acetyl-CoA starter unit with 6 malonyl-CoA units. The downstream nonribosomal peptide synthetase (NRPS) module then amidates the carboxyl end of the polyketide with a 2S,3S-methylproline derived from L-isoleucine by the 2-oxoglutarate-dependent dioxygenase ucsF which converts L-isoleucine to (4S,5S)-4-methylpyrroline-5-carboxylate that is further converted to 2S,3S-methylproline by the pyrroline-5-carboxylate reductase ucsG. Reductive release of the completed aminoacyl polyketide from the assembly line can form the 3-pyrrolin-2-one structure via an intramolecular Knoevenagel reaction. Because ucsA lacks a designated enoylreductase (ER) domain, the required activity is provided the enoyl reductase ucsL. This keto acyclic precursor is the substrate of the Diels-Alderase ucsH, that catalyzes the Diels-Alder cycloaddition. Oxidation of the 3S-methyl group to a carboxylate by the cytochrome P450 monooxygenase ucsK allows an oxa-Michael cyclization that might involve the reductase/dehydrogenase ucsI and which furnishes the furopyrrolizidine. The oxidase ucsJ likely plays a critical role in stereoselective reduction of the C5-C6 double bond to afford the required R-configured carboxylate group. Further enolization and oxidation at C5 by an unidentified enzyme affords the last intermediate that can undergo oxa-Michael cyclization to yield UCS1025A. The sequence is that of Diels-Alderase ucsH from Acremonium sp.